The chain runs to 513 residues: Probable cytosol aminopeptidase (513 aa).

The Mn(2+) site is built by Lys-275 and Asp-280. Lys-287 is an active-site residue. Mn(2+) is bound by residues Asp-298, Asp-357, and Glu-359. Arg-361 is a catalytic residue.

This sequence belongs to the peptidase M17 family. It depends on Mn(2+) as a cofactor.

The protein resides in the cytoplasm. It carries out the reaction Release of an N-terminal amino acid, Xaa-|-Yaa-, in which Xaa is preferably Leu, but may be other amino acids including Pro although not Arg or Lys, and Yaa may be Pro. Amino acid amides and methyl esters are also readily hydrolyzed, but rates on arylamides are exceedingly low.. It catalyses the reaction Release of an N-terminal amino acid, preferentially leucine, but not glutamic or aspartic acids.. Its function is as follows. Presumably involved in the processing and regular turnover of intracellular proteins. Catalyzes the removal of unsubstituted N-terminal amino acids from various peptides. This Streptomyces avermitilis (strain ATCC 31267 / DSM 46492 / JCM 5070 / NBRC 14893 / NCIMB 12804 / NRRL 8165 / MA-4680) protein is Probable cytosol aminopeptidase.